We begin with the raw amino-acid sequence, 200 residues long: uncharacterized protein (200 aa).

Belongs to the HAD-like hydrolase superfamily. CbbY/CbbZ/Gph/YieH family.

This is an uncharacterized protein from Haemophilus influenzae (strain ATCC 51907 / DSM 11121 / KW20 / Rd).